The primary structure comprises 110 residues: FMRFamide-like neuropeptides 11 (110 aa).

The first 22 residues, 1–22 (MTQFSALALLLIVFVAASFAQS), serve as a signal peptide directing secretion. Positions 23–29 (YDDVSAE) are excised as a propeptide. Phenylalanine amide is present on residues phenylalanine 40 and phenylalanine 54. Positions 60–85 (LDEEDFAPESPLQGKRNGAPQPFVRF) are disordered. Glutamine 72 is modified (glutamine amide). Phenylalanine 85 is modified (phenylalanine amide). Residues 88–110 (SGQLDHMHDLLSTLQKLKFANNK) constitute a propeptide that is removed on maturation.

This sequence belongs to the FARP (FMRFamide related peptide) family. As to expression, each flp gene is expressed in a distinct set of neurons. Flp-11 is expressed in the DD, VD and DVB motor neurons, the PVC and URX interneurons, and the AUA, BAG, DA, LUA, and SAB neurons. Also expressed in head muscle, socket or sheath cells and uterine cells. Expressed exclusively in PHC sensory neurons in males. Expressed in AVK and RIS interneurons.

Its subcellular location is the secreted. In terms of biological role, FMRFamides and FMRFamide-like peptides are neuropeptides. Induces sleep-like quiescence behavior following release from RIS interneuron. Helps to sustain locomotion stop after gamma-aminobutyric acid (GABA) induces fast slowing response. Inhibits the late-stage body bend swimming frequency in animals through several receptors including frpr-3, npr-4 and npr-22. Its function is as follows. Potent inhibitor of the activity of the dissected pharyngeal myogenic muscle system. Acts as a ligand for the npr-22 receptor in vitro. Acts as a ligand for the npr-22 receptor in vitro. The protein is FMRFamide-like neuropeptides 11 of Caenorhabditis elegans.